Reading from the N-terminus, the 121-residue chain is Ig heavy chain V region MPC 11 (121 aa).

The region spanning 1-112 is the Ig-like domain; sequence EAQLQQSGAE…NSSPYFDSWG (112 aa).

The chain is Ig heavy chain V region MPC 11 from Mus musculus (Mouse).